Reading from the N-terminus, the 139-residue chain is Cytochrome c-type biogenesis protein CcmE (139 aa).

The Cytoplasmic portion of the chain corresponds to M1–R7. A helical; Signal-anchor for type II membrane protein transmembrane segment spans residues M8–A28. Residues F29–K139 are Periplasmic-facing. Positions 120 and 124 each coordinate heme.

Belongs to the CcmE/CycJ family.

It is found in the cell inner membrane. Functionally, heme chaperone required for the biogenesis of c-type cytochromes. Transiently binds heme delivered by CcmC and transfers the heme to apo-cytochromes in a process facilitated by CcmF and CcmH. In Ruthia magnifica subsp. Calyptogena magnifica, this protein is Cytochrome c-type biogenesis protein CcmE.